We begin with the raw amino-acid sequence, 200 residues long: Pyridoxal phosphate homeostasis protein (200 aa).

Lys-11 carries the N6-(pyridoxal phosphate)lysine modification.

This sequence belongs to the pyridoxal phosphate-binding protein YggS/PROSC family. Monomer.

Functionally, pyridoxal 5'-phosphate (PLP)-binding protein, which is involved in PLP homeostasis. In Buchnera aphidicola subsp. Acyrthosiphon pisum (strain APS) (Acyrthosiphon pisum symbiotic bacterium), this protein is Pyridoxal phosphate homeostasis protein.